Consider the following 422-residue polypeptide: MGKAKVPASKRAPSSPVAKPGPVKTLTRKKNKKKKRFWKSKAREVSKKPASGPGAVVRPPKAPEDFSQNWKALQEWLLKQKSQAPEKPLVISQMGSKKKPKIIQQNKKETSPQVKGEEMPAGKDQEASRGSVPSGSKMDRRAPVPRTKASGTEHNKKGTKERTNGDIVPERGDIEHKKRKAKEAAPAPPTEEDIWFDDVDPADIEAAIGPEAAKIARKQLGQSEGSVSLSLVKEQAFGGLTRALALDCEMVGVGPKGEESMAARVSIVNQYGKCVYDKYVKPTEPVTDYRTAVSGIRPENLKQGEELEVVQKEVAEMLKGRILVGHALHNDLKVLFLDHPKKKIRDTQKYKPFKSQVKSGRPSLRLLSEKILGLQVQQAEHCSIQDAQAAMRLYVMVKKEWESMARDRRPLLTAPDHCSDDA.

A disordered region spans residues 1 to 194 (MGKAKVPASK…APAPPTEEDI (194 aa)). Ser15 bears the Phosphoserine mark. Positions 26-40 (LTRKKNKKKKRFWKS) are enriched in basic residues. Phosphoserine occurs at positions 96 and 111. 2 stretches are compositionally biased toward basic and acidic residues: residues 106–127 (NKKE…DQEA) and 151–176 (GTEH…DIEH). Lys115 participates in a covalent cross-link: Glycyl lysine isopeptide (Lys-Gly) (interchain with G-Cter in SUMO2). The 152-residue stretch at 243-394 (ALALDCEMVG…QDAQAAMRLY (152 aa)) folds into the Exonuclease domain.

The protein belongs to the REXO4 family. In terms of assembly, can bind ESR1 and ESR2. This interaction is abrogated by estrogen and augmented by tamoxifen treatment.

Its subcellular location is the nucleus. It localises to the nucleolus. The sequence is that of RNA exonuclease 4 (REXO4) from Homo sapiens (Human).